The following is a 378-amino-acid chain: Pre-B-cell leukemia transcription factor 4 (378 aa).

Over residues 1–15 (MAAPLRPVPPQPAPR) the composition is skewed to pro residues. 2 disordered regions span residues 1–24 (MAAP…APLG) and 100–125 (VSRP…PNDN). The 193-residue stretch at 22 to 214 (PLGHDTSDVL…VMTLRSRFLD (193 aa)) folds into the PBC domain. Residues 29 to 107 (DVLQQIMAIT…EGVSRPEKRG (79 aa)) form a PBC-A region. Residues 109 to 120 (GAAAGSTATPGG) show a composition bias toward low complexity. The tract at residues 110–214 (AAAGSTATPG…VMTLRSRFLD (105 aa)) is PBC-B. Residues 215 to 277 (ARRKRRNFSK…NKRIRYKKNT (63 aa)) constitute a DNA-binding region (homeobox; TALE-type). 2 disordered regions span residues 291–320 (ASTV…PLPL) and 355–378 (RAAP…AASN). Over residues 356-370 (AAPQPASSPAGESGS) the composition is skewed to low complexity.

Belongs to the TALE/PBX homeobox family. As to expression, almost exclusively expressed in testis.

Its subcellular location is the nucleus. This chain is Pre-B-cell leukemia transcription factor 4 (Pbx4), found in Mus musculus (Mouse).